The sequence spans 388 residues: Succinate--CoA ligase [ADP-forming] subunit beta (388 aa).

One can recognise an ATP-grasp domain in the interval 9 to 244; that stretch reads KGILSGFDVR…PHEYSEEELE (236 aa). Residues lysine 46, 53–55, glutamate 99, valine 102, and glutamate 107 each bind ATP; that span reads GRG. 2 residues coordinate Mg(2+): asparagine 199 and aspartate 213. Substrate is bound by residues asparagine 264 and 320–322; that span reads GIM.

It belongs to the succinate/malate CoA ligase beta subunit family. As to quaternary structure, heterotetramer of two alpha and two beta subunits. Requires Mg(2+) as cofactor.

The enzyme catalyses succinate + ATP + CoA = succinyl-CoA + ADP + phosphate. The catalysed reaction is GTP + succinate + CoA = succinyl-CoA + GDP + phosphate. The protein operates within carbohydrate metabolism; tricarboxylic acid cycle; succinate from succinyl-CoA (ligase route): step 1/1. Functionally, succinyl-CoA synthetase functions in the citric acid cycle (TCA), coupling the hydrolysis of succinyl-CoA to the synthesis of either ATP or GTP and thus represents the only step of substrate-level phosphorylation in the TCA. The beta subunit provides nucleotide specificity of the enzyme and binds the substrate succinate, while the binding sites for coenzyme A and phosphate are found in the alpha subunit. In Anaplasma phagocytophilum (strain HZ), this protein is Succinate--CoA ligase [ADP-forming] subunit beta.